Reading from the N-terminus, the 585-residue chain is Protein FAM151A (585 aa).

The helical transmembrane segment at 14-34 (WVFASITCVSAVAIAAIVLAI) threads the bilayer.

The protein belongs to the menorin family.

It is found in the membrane. The protein is Protein FAM151A (FAM151A) of Pongo abelii (Sumatran orangutan).